A 146-amino-acid polypeptide reads, in one-letter code: Hemoglobin subunit beta (146 aa).

Position 1 is an N-acetylvaline (Val1). The Globin domain maps to 2–146 (HLTGEEKSAV…VATALAHKYH (145 aa)). Thr12 bears the Phosphothreonine mark. The residue at position 44 (Ser44) is a Phosphoserine. Residue His63 participates in heme b binding. At Lys82 the chain carries N6-acetyllysine. His92 contacts heme b. S-nitrosocysteine is present on Cys93. An N6-acetyllysine modification is found at Lys144.

This sequence belongs to the globin family. Heterotetramer of two alpha chains and two beta chains. As to expression, red blood cells.

In terms of biological role, involved in oxygen transport from the lung to the various peripheral tissues. This chain is Hemoglobin subunit beta (HBB), found in Tursiops truncatus (Atlantic bottle-nosed dolphin).